Consider the following 111-residue polypeptide: Large ribosomal subunit protein uL23 (111 aa).

This sequence belongs to the universal ribosomal protein uL23 family. In terms of assembly, part of the 50S ribosomal subunit. Contacts protein L29, and trigger factor when it is bound to the ribosome.

Functionally, one of the early assembly proteins it binds 23S rRNA. One of the proteins that surrounds the polypeptide exit tunnel on the outside of the ribosome. Forms the main docking site for trigger factor binding to the ribosome. The protein is Large ribosomal subunit protein uL23 of Chlamydia felis (strain Fe/C-56) (Chlamydophila felis).